Consider the following 187-residue polypeptide: Transmembrane protein 212 (187 aa).

The next 5 membrane-spanning stretches (helical) occupy residues 11–31 (TLVT…FPVF), 42–62 (VWIA…SLVL), 76–96 (AVFT…TVAL), 106–126 (FYSF…TFPF), and 148–168 (LQVL…AVFI).

The protein resides in the membrane. This chain is Transmembrane protein 212 (Tmem212), found in Mus musculus (Mouse).